A 149-amino-acid polypeptide reads, in one-letter code: Putative mediator of RNA polymerase II transcription subunit 22 (149 aa).

It belongs to the Mediator complex subunit 22 family. In terms of assembly, component of the Mediator complex.

The protein localises to the nucleus. Component of the Mediator complex, a coactivator involved in the regulated transcription of nearly all RNA polymerase II-dependent genes. Mediator functions as a bridge to convey information from gene-specific regulatory proteins to the basal RNA polymerase II transcription machinery. Mediator is recruited to promoters by direct interactions with regulatory proteins and serves as a scaffold for the assembly of a functional preinitiation complex with RNA polymerase II and the general transcription factors. The protein is Putative mediator of RNA polymerase II transcription subunit 22 (med22) of Dictyostelium discoideum (Social amoeba).